Here is a 247-residue protein sequence, read N- to C-terminus: MSKETDRIFAQPLAQVPDFAFNEDVVRVFPDMIKRSVPGYPTIVENLGVLAAQFAQPDTVLYDLGSSLGAVTQALRRHVRSEGCEVIAIDNSSAMVERCREYLNAQNSMFQELLPVQVIEGDILALEFKPASVVALNFTLQFIAPEQRLILLGRIRDALVPGGALILSEKLRFDDEQEHALLTDLHIAFKRANGYSDLEIAQKRSAIENVMKPDSLEEHRQRLLAAGFSKVVPWFQCLNFTSLIALP.

S-adenosyl-L-methionine-binding positions include tyrosine 40, 65-67 (GSS), 90-91 (DN), 122-123 (DI), asparagine 137, and arginine 204.

Belongs to the class I-like SAM-binding methyltransferase superfamily. Cx-SAM synthase family. In terms of assembly, homodimer.

It carries out the reaction prephenate + S-adenosyl-L-methionine = carboxy-S-adenosyl-L-methionine + 3-phenylpyruvate + H2O. Catalyzes the conversion of S-adenosyl-L-methionine (SAM) to carboxy-S-adenosyl-L-methionine (Cx-SAM). In Pseudomonas savastanoi pv. phaseolicola (strain 1448A / Race 6) (Pseudomonas syringae pv. phaseolicola (strain 1448A / Race 6)), this protein is Carboxy-S-adenosyl-L-methionine synthase.